The primary structure comprises 262 residues: Protein BcsX (262 aa).

Its pathway is glycan metabolism; bacterial cellulose biosynthesis. In Komagataeibacter xylinus (Gluconacetobacter xylinus), this protein is Protein BcsX (bcsX).